Consider the following 454-residue polypeptide: NADH-quinone oxidoreductase subunit H (454 aa).

Helical transmembrane passes span 18-38, 88-108, 131-151, 172-192, 206-226, 256-276, 296-316, 328-348, and 360-380; these read WWLVVVKAVFCFAFLMITVLF, VVYVLAPIVAAIPAFMAIAVI, LPIAMLYILAVASVGIYGIVL, MISYEIAMGAAFASVFLYSGS, WYIVLLPVSFVIYIVTMVGET, FMLAEYVNMVTVSAVSTTLFL, WWPMLWFVVKVQLLLFFFIWL, LMKLGWKVLIPVSVVWLMLVA, and FADIALYVGGGVLVLLLLSFV. Residues 395–454 are disordered; the sequence is AEEPAAFDPMAGGFPVPPLPGQTLPPVPRRRPRRDRELIVSGGPDTASDGPANGKEASDG. Pro residues predominate over residues 409–421; sequence PVPPLPGQTLPPV.

It belongs to the complex I subunit 1 family. In terms of assembly, NDH-1 is composed of 14 different subunits. Subunits NuoA, H, J, K, L, M, N constitute the membrane sector of the complex.

Its subcellular location is the cell membrane. The catalysed reaction is a quinone + NADH + 5 H(+)(in) = a quinol + NAD(+) + 4 H(+)(out). Functionally, NDH-1 shuttles electrons from NADH, via FMN and iron-sulfur (Fe-S) centers, to quinones in the respiratory chain. The immediate electron acceptor for the enzyme in this species is believed to be ubiquinone. Couples the redox reaction to proton translocation (for every two electrons transferred, four hydrogen ions are translocated across the cytoplasmic membrane), and thus conserves the redox energy in a proton gradient. This subunit may bind ubiquinone. This chain is NADH-quinone oxidoreductase subunit H, found in Streptomyces avermitilis (strain ATCC 31267 / DSM 46492 / JCM 5070 / NBRC 14893 / NCIMB 12804 / NRRL 8165 / MA-4680).